Reading from the N-terminus, the 236-residue chain is Small ribosomal subunit protein uS2c (236 aa).

Belongs to the universal ribosomal protein uS2 family.

The protein localises to the plastid. It is found in the chloroplast. This chain is Small ribosomal subunit protein uS2c (rps2), found in Daucus carota (Wild carrot).